The following is a 432-amino-acid chain: Guanine/hypoxanthine permease PbuO (432 aa).

The next 10 membrane-spanning stretches (helical) occupy residues 15 to 35 (IIAG…NPVI), 51 to 71 (IIAS…PIAI), 92 to 112 (GITY…FIIL), 133 to 153 (ITTG…GIVA), 174 to 194 (LVGL…ALFI), 196 to 216 (MAAT…KGFM), 234 to 254 (FGDV…LVTI), 340 to 360 (ALSG…SLMM), 379 to 399 (LVIL…LGFI), and 412 to 432 (REIH…LFIL).

This sequence belongs to the nucleobase:cation symporter-2 (NCS2) (TC 2.A.40) family. Azg-like subfamily.

The protein localises to the cell membrane. In terms of biological role, involved in the uptake of the purine bases hypoxanthine and guanine. May work at purine concentrations higher than 100 uM. This chain is Guanine/hypoxanthine permease PbuO (pbuO), found in Bacillus subtilis (strain 168).